Consider the following 44-residue polypeptide: Protein PsbN (44 aa).

Residues 6–26 (FFFTIFLWFFLLSITAYSIYV) form a helical membrane-spanning segment.

The protein belongs to the PsbN family.

It localises to the plastid. The protein localises to the chloroplast thylakoid membrane. May play a role in photosystem I and II biogenesis. This Stigeoclonium helveticum (Green alga) protein is Protein PsbN.